The following is a 400-amino-acid chain: Acetylornithine aminotransferase (400 aa).

Pyridoxal 5'-phosphate is bound by residues 113 to 114 (GA) and phenylalanine 139. Residue arginine 142 coordinates N(2)-acetyl-L-ornithine. 224–227 (DEVQ) is a pyridoxal 5'-phosphate binding site. Position 253 is an N6-(pyridoxal phosphate)lysine (lysine 253). Serine 281 contacts N(2)-acetyl-L-ornithine. Threonine 282 contributes to the pyridoxal 5'-phosphate binding site.

Belongs to the class-III pyridoxal-phosphate-dependent aminotransferase family. ArgD subfamily. As to quaternary structure, homodimer. Requires pyridoxal 5'-phosphate as cofactor.

It is found in the cytoplasm. It catalyses the reaction N(2)-acetyl-L-ornithine + 2-oxoglutarate = N-acetyl-L-glutamate 5-semialdehyde + L-glutamate. It participates in amino-acid biosynthesis; L-arginine biosynthesis; N(2)-acetyl-L-ornithine from L-glutamate: step 4/4. In Mycobacterium bovis (strain ATCC BAA-935 / AF2122/97), this protein is Acetylornithine aminotransferase.